We begin with the raw amino-acid sequence, 269 residues long: MPELPEVETSRRGIEPHLVGATILHAVVRNGRLRWPVSEEIYRLSDQPVLSVQRRAKYLLLELPEGWIIIHLGMSGSLRILPEELPPEKHDHVDLVMSNGKVLRYTDPRRFGAWLWTKELEGHNVLAHLGPEPLSDDFNGEYLHQKCAKKKTAIKPWLMDNKLVVGVGNIYASESLFAAGIHPDRLASSLSLAECELLARVIKAVLLRSIEQGGTTLKDFLQSDGKPGYFAQELQVYGRKGEPCRVCGTPIVATKHAQRATFYCRQCQK.

P2 acts as the Schiff-base intermediate with DNA in catalysis. The Proton donor role is filled by E3. K57 serves as the catalytic Proton donor; for beta-elimination activity. DNA contacts are provided by H90, R109, and K150. An FPG-type zinc finger spans residues 235–269 (QVYGRKGEPCRVCGTPIVATKHAQRATFYCRQCQK). The active-site Proton donor; for delta-elimination activity is the R259.

Belongs to the FPG family. As to quaternary structure, monomer. Zn(2+) serves as cofactor.

It catalyses the reaction Hydrolysis of DNA containing ring-opened 7-methylguanine residues, releasing 2,6-diamino-4-hydroxy-5-(N-methyl)formamidopyrimidine.. It carries out the reaction 2'-deoxyribonucleotide-(2'-deoxyribose 5'-phosphate)-2'-deoxyribonucleotide-DNA = a 3'-end 2'-deoxyribonucleotide-(2,3-dehydro-2,3-deoxyribose 5'-phosphate)-DNA + a 5'-end 5'-phospho-2'-deoxyribonucleoside-DNA + H(+). In terms of biological role, involved in base excision repair of DNA damaged by oxidation or by mutagenic agents. Acts as a DNA glycosylase that recognizes and removes damaged bases. Has a preference for oxidized purines, such as 7,8-dihydro-8-oxoguanine (8-oxoG). Has AP (apurinic/apyrimidinic) lyase activity and introduces nicks in the DNA strand. Cleaves the DNA backbone by beta-delta elimination to generate a single-strand break at the site of the removed base with both 3'- and 5'-phosphates. The chain is Formamidopyrimidine-DNA glycosylase from Escherichia coli O157:H7.